The following is a 252-amino-acid chain: Protein PF0476 (252 aa).

This sequence belongs to the CinA family.

The polypeptide is Protein PF0476 (Pyrococcus furiosus (strain ATCC 43587 / DSM 3638 / JCM 8422 / Vc1)).